Here is a 109-residue protein sequence, read N- to C-terminus: Photosystem II reaction center Psb28 protein (109 aa).

It belongs to the Psb28 family. As to quaternary structure, part of the photosystem II complex.

The protein resides in the plastid. Its subcellular location is the chloroplast thylakoid membrane. This Cyanidioschyzon merolae (strain NIES-3377 / 10D) (Unicellular red alga) protein is Photosystem II reaction center Psb28 protein.